Reading from the N-terminus, the 365-residue chain is Peptide chain release factor 2 (365 aa).

An N5-methylglutamine modification is found at Gln-252.

This sequence belongs to the prokaryotic/mitochondrial release factor family. Methylated by PrmC. Methylation increases the termination efficiency of RF2.

It localises to the cytoplasm. In terms of biological role, peptide chain release factor 2 directs the termination of translation in response to the peptide chain termination codons UGA and UAA. The polypeptide is Peptide chain release factor 2 (Yersinia pseudotuberculosis serotype O:1b (strain IP 31758)).